A 229-amino-acid polypeptide reads, in one-letter code: Artemin (229 aa).

Ala1 carries the post-translational modification N-acetylalanine. In terms of domain architecture, Ferritin-like diiron spans 25-173 (HNFDPECEKA…DCLSNLHCIG (149 aa)).

It belongs to the ferritin family.

The polypeptide is Artemin (Artemia salina (Brine shrimp)).